Here is a 494-residue protein sequence, read N- to C-terminus: Autocrine proliferation repressor protein A (494 aa).

A signal peptide spans 1–18 (MSKLLILLLLSLVASIFS). 3 N-linked (GlcNAc...) asparagine glycosylation sites follow: N37, N153, and N302.

This sequence belongs to the pqaA family. As to quaternary structure, interacts with cfaD.

It localises to the secreted. Functionally, inhibitor that slows proliferation of secreting cells (also known as chalone). May function by binding to cell surface receptors. Requires cfaD for activity. Overexpression slows proliferation. The protein is Autocrine proliferation repressor protein A (aprA) of Dictyostelium discoideum (Social amoeba).